The sequence spans 278 residues: Rhomboid protease GlpG (278 aa).

Transmembrane regions (helical) follow at residues 94-114 (AGPLTLSVMVLCIAIYILMLI), 143-163 (AFLHFSLLHILFNLMWWWYLG), 175-195 (LLVLTIVSAVFSGWGQSLFSG), 196-216 (ANFGGLSGVVYALMGYVWLTG), 224-241 (ISLPRGLMAFSVLWLIAG), and 245-267 (ILGLSIANAAHVSGLIIGLLMAF). Residue Ser-202 is the Nucleophile of the active site. Residue His-255 is part of the active site.

This sequence belongs to the peptidase S54 family.

It is found in the cell inner membrane. The catalysed reaction is Cleaves type-1 transmembrane domains using a catalytic dyad composed of serine and histidine that are contributed by different transmembrane domains.. Functionally, rhomboid-type serine protease that catalyzes intramembrane proteolysis. The protein is Rhomboid protease GlpG of Yersinia pseudotuberculosis serotype I (strain IP32953).